The primary structure comprises 150 residues: D-aminoacyl-tRNA deacylase (150 aa).

Residues 138–139 carry the Gly-cisPro motif, important for rejection of L-amino acids motif; the sequence is GP.

This sequence belongs to the DTD family. In terms of assembly, homodimer.

It is found in the cytoplasm. It carries out the reaction glycyl-tRNA(Ala) + H2O = tRNA(Ala) + glycine + H(+). It catalyses the reaction a D-aminoacyl-tRNA + H2O = a tRNA + a D-alpha-amino acid + H(+). An aminoacyl-tRNA editing enzyme that deacylates mischarged D-aminoacyl-tRNAs. Also deacylates mischarged glycyl-tRNA(Ala), protecting cells against glycine mischarging by AlaRS. Acts via tRNA-based rather than protein-based catalysis; rejects L-amino acids rather than detecting D-amino acids in the active site. By recycling D-aminoacyl-tRNA to D-amino acids and free tRNA molecules, this enzyme counteracts the toxicity associated with the formation of D-aminoacyl-tRNA entities in vivo and helps enforce protein L-homochirality. The polypeptide is D-aminoacyl-tRNA deacylase (Sorangium cellulosum (strain So ce56) (Polyangium cellulosum (strain So ce56))).